A 348-amino-acid polypeptide reads, in one-letter code: Protein RecA (348 aa).

Position 64–71 (64–71 (GPESSGKT)) interacts with ATP. A compositionally biased stretch (basic and acidic residues) spans 326–335 (EIDGTNKEPL). The tract at residues 326-348 (EIDGTNKEPLDENEETLSLLDDE) is disordered. Acidic residues predominate over residues 336–348 (DENEETLSLLDDE).

Belongs to the RecA family.

It localises to the cytoplasm. In terms of biological role, can catalyze the hydrolysis of ATP in the presence of single-stranded DNA, the ATP-dependent uptake of single-stranded DNA by duplex DNA, and the ATP-dependent hybridization of homologous single-stranded DNAs. It interacts with LexA causing its activation and leading to its autocatalytic cleavage. The chain is Protein RecA from Listeria innocua serovar 6a (strain ATCC BAA-680 / CLIP 11262).